Reading from the N-terminus, the 503-residue chain is MDFSIKGCDWSKGTANGFLTGKSDCIVLGVFEAQTLSGAALDIDEATKGLVSRVIKAGDIDGKLGKTLFLHEVSGIGASRVLLVGLGRQDAFSQKAYGDAAKAAWRALLGTKVVQVTFTLAQLPVPERASDWGVRAAILALRNETYKFTQMKSKPDAGAPALKRVVFSVDPADDKAAKVAAKQAVALANGMDLTRDLGNLPGNVCTPTYLANTAKKIAKDWGLKVDVLGLKQIQALKMGSFLSVAKGSVEPPQFIVLQYRGAAAKAAPVVLVGKGITFDSGGISLKPGEGMDEMKYDMCGAGSVLGTMRAVAEMGLKVNVVAIVPTCENMPAGNANKPGDIVTSMKGLTIEVLNTDAEGRLILCDALTYAERFKPAAVIDVATLTGACIIALGHHNTGLFSKDDALAGELLDASREAGDPAWRLPLDDEYQDQLKSNFADLANIGGRPAGSVTAACFLSRFAENYPWAHLDIAGTAWKSGAAKGATGRPVPLLAQFLIDRAGA.

Residues lysine 274 and aspartate 279 each coordinate Mn(2+). The active site involves lysine 286. Mn(2+)-binding residues include aspartate 297, aspartate 356, and glutamate 358. Arginine 360 is an active-site residue.

This sequence belongs to the peptidase M17 family. The cofactor is Mn(2+).

It localises to the cytoplasm. The enzyme catalyses Release of an N-terminal amino acid, Xaa-|-Yaa-, in which Xaa is preferably Leu, but may be other amino acids including Pro although not Arg or Lys, and Yaa may be Pro. Amino acid amides and methyl esters are also readily hydrolyzed, but rates on arylamides are exceedingly low.. It catalyses the reaction Release of an N-terminal amino acid, preferentially leucine, but not glutamic or aspartic acids.. In terms of biological role, presumably involved in the processing and regular turnover of intracellular proteins. Catalyzes the removal of unsubstituted N-terminal amino acids from various peptides. The chain is Probable cytosol aminopeptidase from Burkholderia pseudomallei (strain 1106a).